The primary structure comprises 272 residues: HMP-PP phosphatase (272 aa).

D8 functions as the Nucleophile in the catalytic mechanism. 3 residues coordinate Mg(2+): D8, D10, and D212.

This sequence belongs to the HAD-like hydrolase superfamily. Cof family. Mg(2+) is required as a cofactor.

The enzyme catalyses 4-amino-2-methyl-5-(diphosphooxymethyl)pyrimidine + H2O = 4-amino-2-methyl-5-(phosphooxymethyl)pyrimidine + phosphate + H(+). Catalyzes the hydrolysis of 4-amino-2-methyl-5-hydroxymethylpyrimidine pyrophosphate (HMP-PP) to 4-amino-2-methyl-5-hydroxymethylpyrimidine phosphate (HMP-P). This Salmonella agona (strain SL483) protein is HMP-PP phosphatase.